A 183-amino-acid chain; its full sequence is ATP synthase subunit b, chloroplastic (183 aa).

Residues 25–45 form a helical membrane-spanning segment; sequence DILATNLINLTVVVGVLIFFG.

This sequence belongs to the ATPase B chain family. F-type ATPases have 2 components, F(1) - the catalytic core - and F(0) - the membrane proton channel. F(1) has five subunits: alpha(3), beta(3), gamma(1), delta(1), epsilon(1). F(0) has four main subunits: a(1), b(1), b'(1) and c(10-14). The alpha and beta chains form an alternating ring which encloses part of the gamma chain. F(1) is attached to F(0) by a central stalk formed by the gamma and epsilon chains, while a peripheral stalk is formed by the delta, b and b' chains.

It is found in the plastid. It localises to the chloroplast thylakoid membrane. Its function is as follows. F(1)F(0) ATP synthase produces ATP from ADP in the presence of a proton or sodium gradient. F-type ATPases consist of two structural domains, F(1) containing the extramembraneous catalytic core and F(0) containing the membrane proton channel, linked together by a central stalk and a peripheral stalk. During catalysis, ATP synthesis in the catalytic domain of F(1) is coupled via a rotary mechanism of the central stalk subunits to proton translocation. Component of the F(0) channel, it forms part of the peripheral stalk, linking F(1) to F(0). This is ATP synthase subunit b, chloroplastic from Sorghum bicolor (Sorghum).